We begin with the raw amino-acid sequence, 122 residues long: Ribosomal protein eL22-like 1 (122 aa).

3 positions are modified to phosphoserine: S112, S118, and S120.

This sequence belongs to the eukaryotic ribosomal protein eL22 family.

This Mus musculus (Mouse) protein is Ribosomal protein eL22-like 1 (Rpl22l1).